Consider the following 31-residue polypeptide: Cyclotide hyen-I (31 aa).

The segment at residues 1 to 31 (GSTPCGESCVWIPCISGIVGCSCSNKVCYMD) is a cross-link (cyclopeptide (Gly-Asp)). 3 disulfides stabilise this stretch: cysteine 5–cysteine 21, cysteine 9–cysteine 23, and cysteine 14–cysteine 28.

Post-translationally, this is a cyclic peptide. As to expression, detected in seeds (at protein level).

Its function is as follows. Probably participates in a plant defense mechanism. The polypeptide is Cyclotide hyen-I (Pigea enneasperma (Spade flower)).